A 647-amino-acid polypeptide reads, in one-letter code: Probable potassium transport system protein Kup (647 aa).

A run of 13 helical transmembrane segments spans residues 32–52 (IALM…SPLY), 74–94 (VISM…VLFV), 124–144 (LLII…AIIT), 166–186 (FVLP…KTGT), 193–213 (FGPI…HQVI), 230–250 (FLIE…LVLT), 271–291 (WFFI…AMFL), 300–320 (PFFL…ATAA), 322–342 (VIAS…AILL), 361–381 (IYMP…VLAF), 390–410 (AYGI…AIVM), 418–438 (TILV…FLTA), and 443–463 (IMEG…FLMT).

This sequence belongs to the HAK/KUP transporter (TC 2.A.72) family.

The protein resides in the cell inner membrane. The enzyme catalyses K(+)(in) + H(+)(in) = K(+)(out) + H(+)(out). Functionally, transport of potassium into the cell. Likely operates as a K(+):H(+) symporter. This is Probable potassium transport system protein Kup from Polynucleobacter asymbioticus (strain DSM 18221 / CIP 109841 / QLW-P1DMWA-1) (Polynucleobacter necessarius subsp. asymbioticus).